Here is a 158-residue protein sequence, read N- to C-terminus: NADH-quinone oxidoreductase subunit B 1 (158 aa).

The [4Fe-4S] cluster site is built by Cys37, Cys38, Cys102, and Cys132.

Belongs to the complex I 20 kDa subunit family. In terms of assembly, NDH-1 is composed of 14 different subunits. Subunits NuoB, C, D, E, F, and G constitute the peripheral sector of the complex. [4Fe-4S] cluster is required as a cofactor.

Its subcellular location is the cell inner membrane. It carries out the reaction a quinone + NADH + 5 H(+)(in) = a quinol + NAD(+) + 4 H(+)(out). Its function is as follows. NDH-1 shuttles electrons from NADH, via FMN and iron-sulfur (Fe-S) centers, to quinones in the respiratory chain. Couples the redox reaction to proton translocation (for every two electrons transferred, four hydrogen ions are translocated across the cytoplasmic membrane), and thus conserves the redox energy in a proton gradient. This chain is NADH-quinone oxidoreductase subunit B 1, found in Chromobacterium violaceum (strain ATCC 12472 / DSM 30191 / JCM 1249 / CCUG 213 / NBRC 12614 / NCIMB 9131 / NCTC 9757 / MK).